Reading from the N-terminus, the 187-residue chain is MKIIGILGIQGDIEEHEDAVKKINCIPKRIRTVDDLEGIDALIIPGGESTTIGKLMVSYGFIDKIRNLKIPILGTCAGMVLLSKGTGKEQPLLEMLNVTIKRNAYGSQKDSFEKEIDLGGKKINAVFIRAPQVGEILSKDVEIISKDDENIVGIKEGNIMAISFHPELSDDGVIAYEYFLKNFVEKR.

47 to 49 is a binding site for L-glutamine; that stretch reads GES. C76 serves as the catalytic Nucleophile. L-glutamine is bound by residues R102 and 128–129; that span reads IR. Active-site charge relay system residues include H165 and E167.

Belongs to the glutaminase PdxT/SNO family. As to quaternary structure, in the presence of PdxS, forms a dodecamer of heterodimers. Only shows activity in the heterodimer.

The catalysed reaction is aldehydo-D-ribose 5-phosphate + D-glyceraldehyde 3-phosphate + L-glutamine = pyridoxal 5'-phosphate + L-glutamate + phosphate + 3 H2O + H(+). The enzyme catalyses L-glutamine + H2O = L-glutamate + NH4(+). Its pathway is cofactor biosynthesis; pyridoxal 5'-phosphate biosynthesis. Catalyzes the hydrolysis of glutamine to glutamate and ammonia as part of the biosynthesis of pyridoxal 5'-phosphate. The resulting ammonia molecule is channeled to the active site of PdxS. The protein is Pyridoxal 5'-phosphate synthase subunit PdxT of Methanococcus maripaludis (strain DSM 14266 / JCM 13030 / NBRC 101832 / S2 / LL).